A 287-amino-acid polypeptide reads, in one-letter code: Mitochondrial dicarboxylate carrier (287 aa).

Solcar repeat units lie at residues 7 to 87 (SRWY…MRDY), 100 to 187 (NKVL…AKQL), and 196 to 279 (DNIF…LRKH). The next 3 membrane-spanning stretches (helical) occupy residues 9–29 (WYFG…LDLL), 62–81 (GLSA…FAIY), and 102–122 (VLLG…ADLV). Position 158 is an N6-acetyllysine (Lys158). A run of 3 helical transmembrane segments spans residues 162 to 181 (GATM…LSCY), 202 to 222 (FVSS…LDVL), and 254 to 274 (GLFP…MFLE).

It belongs to the mitochondrial carrier (TC 2.A.29) family. As to expression, expressed at very high levels in white adipose tissue. And at low levels in brown adipose tissue, kidney and liver.

It localises to the mitochondrion inner membrane. The enzyme catalyses (S)-malate(in) + phosphate(out) = (S)-malate(out) + phosphate(in). The catalysed reaction is malonate(out) + (S)-malate(in) = malonate(in) + (S)-malate(out). It catalyses the reaction (S)-malate(in) + succinate(out) = (S)-malate(out) + succinate(in). It carries out the reaction (S)-malate(in) + sulfate(out) = (S)-malate(out) + sulfate(in). The enzyme catalyses malonate(out) + phosphate(in) = malonate(in) + phosphate(out). The catalysed reaction is succinate(out) + phosphate(in) = succinate(in) + phosphate(out). It catalyses the reaction sulfate(out) + phosphate(in) = sulfate(in) + phosphate(out). It carries out the reaction malonate(out) + succinate(in) = malonate(in) + succinate(out). Regulated by circadian protein CLOCK (Circadian Locomotor Output Cycles Kaput). Functionally, catalyzes the electroneutral exchange or flux of physiologically important metabolites such as dicarboxylates (malonate, malate, succinate), inorganic sulfur-containing anions, and phosphate, across mitochondrial inner membrane. Plays an important role in gluconeogenesis, fatty acid metabolism, urea synthesis, and sulfur metabolism, particularly in liver, by supplying the substrates for the different metabolic processes. Regulates fatty acid release from adipocytes, and contributes to systemic insulin sensitivity. The sequence is that of Mitochondrial dicarboxylate carrier from Mus musculus (Mouse).